The sequence spans 515 residues: Fatty acyl-CoA reductase 1 (515 aa).

Residues 1–465 (MVSIPEYYEG…ARKHLNKLRN (465 aa)) lie on the Cytoplasmic side of the membrane. Residues 466-483 (IRYGFNTILVILIWRIFI) form a helical membrane-spanning segment. Over 484 to 515 (ARSQMARNIWYFVVSLCYKFLSYFRASSTMRY) the chain is Peroxisomal.

It belongs to the fatty acyl-CoA reductase family.

It localises to the peroxisome membrane. The enzyme catalyses a long-chain fatty acyl-CoA + 2 NADPH + 2 H(+) = a long-chain primary fatty alcohol + 2 NADP(+) + CoA. It carries out the reaction hexadecanoyl-CoA + 2 NADPH + 2 H(+) = hexadecan-1-ol + 2 NADP(+) + CoA. It catalyses the reaction octadecanoyl-CoA + 2 NADPH + 2 H(+) = octadecan-1-ol + 2 NADP(+) + CoA. The catalysed reaction is (9Z)-octadecenoyl-CoA + 2 NADPH + 2 H(+) = (9Z)-octadecen-1-ol + 2 NADP(+) + CoA. The enzyme catalyses (9Z,12Z)-octadecadienoyl-CoA + 2 NADPH + 2 H(+) = (9Z,12Z)-octadecadien-1-ol + 2 NADP(+) + CoA. It carries out the reaction eicosanoyl-CoA + 2 NADPH + 2 H(+) = eicosan-1-ol + 2 NADP(+) + CoA. It catalyses the reaction 16-methylheptadecanoyl-CoA + 2 NADPH + 2 H(+) = 16-methylheptadecan-1-ol + 2 NADP(+) + CoA. The catalysed reaction is 18-methylnonadecanoyl-CoA + 2 NADPH + 2 H(+) = 18-methylnonadecan-1-ol + 2 NADP(+) + CoA. In terms of biological role, catalyzes the reduction of saturated and unsaturated C16 or C18 fatty acyl-CoA to fatty alcohols. It plays an essential role in the production of ether lipids/plasmalogens which synthesis requires fatty alcohols. In parallel, it is also required for wax monoesters production since fatty alcohols also constitute a substrate for their synthesis. This is Fatty acyl-CoA reductase 1 from Gallus gallus (Chicken).